The following is a 275-amino-acid chain: Dermonecrotic toxin SpaSicTox-betaIIA2 (275 aa).

His5 is a catalytic residue. Glu25 and Asp27 together coordinate Mg(2+). The Nucleophile role is filled by His41. Disulfide bonds link Cys45–Cys51 and Cys47–Cys190. Asp85 lines the Mg(2+) pocket.

It belongs to the arthropod phospholipase D family. Class II subfamily. The cofactor is Mg(2+). Expressed by the venom gland.

It is found in the secreted. It carries out the reaction an N-(acyl)-sphingosylphosphocholine = an N-(acyl)-sphingosyl-1,3-cyclic phosphate + choline. The catalysed reaction is an N-(acyl)-sphingosylphosphoethanolamine = an N-(acyl)-sphingosyl-1,3-cyclic phosphate + ethanolamine. It catalyses the reaction a 1-acyl-sn-glycero-3-phosphocholine = a 1-acyl-sn-glycero-2,3-cyclic phosphate + choline. The enzyme catalyses a 1-acyl-sn-glycero-3-phosphoethanolamine = a 1-acyl-sn-glycero-2,3-cyclic phosphate + ethanolamine. Dermonecrotic toxins cleave the phosphodiester linkage between the phosphate and headgroup of certain phospholipids (sphingolipid and lysolipid substrates), forming an alcohol (often choline) and a cyclic phosphate. This toxin acts on sphingomyelin (SM). It may also act on ceramide phosphoethanolamine (CPE), lysophosphatidylcholine (LPC) and lysophosphatidylethanolamine (LPE), but not on lysophosphatidylserine (LPS), and lysophosphatidylglycerol (LPG). It acts by transphosphatidylation, releasing exclusively cyclic phosphate products as second products. Induces dermonecrosis, hemolysis, increased vascular permeability, edema, inflammatory response, and platelet aggregation. This is Dermonecrotic toxin SpaSicTox-betaIIA2 from Sicarius patagonicus (Six-eyed sand spider).